The primary structure comprises 142 residues: MVLSAADKTNVKAAWSKVGGHAGEFGAEALERMFLGFPTTKTYFPHFDLSHGSAQVKAHGKKVGDALTLAVGHLDDLPGALSNLSDLHAHKLRVDPVNFKLLSHCLLSTLAVHLPNDFTPAVHASLDKFLSSVSTVLTSKYR.

Positions 2 to 142 constitute a Globin domain; the sequence is VLSAADKTNV…VSTVLTSKYR (141 aa). S4 bears the Phosphoserine mark. Residue K8 is modified to N6-succinyllysine. A Phosphothreonine modification is found at T9. K12 is modified (N6-succinyllysine). The residue at position 17 (K17) is an N6-acetyllysine; alternate. K17 is subject to N6-succinyllysine; alternate. At K41 the chain carries N6-succinyllysine. At S50 the chain carries Phosphoserine. H59 contacts O2. H88 contributes to the heme b binding site. A Phosphoserine modification is found at S103. At T109 the chain carries Phosphothreonine. A phosphoserine mark is found at S125 and S132. Phosphothreonine occurs at positions 135 and 138. A Phosphoserine modification is found at S139.

It belongs to the globin family. Heterotetramer of two alpha chains and two beta chains. Red blood cells.

Functionally, involved in oxygen transport from the lung to the various peripheral tissues. Its function is as follows. Hemopressin acts as an antagonist peptide of the cannabinoid receptor CNR1. Hemopressin-binding efficiently blocks cannabinoid receptor CNR1 and subsequent signaling. This Equus przewalskii (Przewalski's horse) protein is Hemoglobin subunit alpha (HBA).